We begin with the raw amino-acid sequence, 211 residues long: Outer-membrane lipoprotein carrier protein (211 aa).

The signal sequence occupies residues 1-24 (MRNRIIVSACAALAMFAIQAPAHA).

It belongs to the LolA family. In terms of assembly, monomer.

It localises to the periplasm. Functionally, participates in the translocation of lipoproteins from the inner membrane to the outer membrane. Only forms a complex with a lipoprotein if the residue after the N-terminal Cys is not an aspartate (The Asp acts as a targeting signal to indicate that the lipoprotein should stay in the inner membrane). The protein is Outer-membrane lipoprotein carrier protein of Cupriavidus necator (strain ATCC 17699 / DSM 428 / KCTC 22496 / NCIMB 10442 / H16 / Stanier 337) (Ralstonia eutropha).